The chain runs to 256 residues: NSGLVYRDMSGGINEAFSDIAGEAAEYFMRGNVDWIVGADIFKSSGGLRYFDQPSRDGRSIDHASQYYSGIDVHSSGVFNRAFYLLANKSGWNVRKGFEVFAVANQLYWTPNSTFDQGGCGVVKAAQDLNYNTADVVAAFNTVGVNASCGTTPPPVGKVLEKGKPITGLSGSRGGEDFYTFTVTNSGSVVVSISGGTGDADLYVKAGSKPTTSSWDCRPYRSGNAEQCSISAVVGTTYHVMLRGYSNYSGVTLRLD.

The Proton donor role is filled by His-74.

Belongs to the peptidase M4 family. It depends on Zn(2+) as a cofactor.

It is found in the secreted. In terms of biological role, may play a role in ulcer formation. Proteolytic digestion of gastric mucus has been suggested as an important mechanism by which its pathogenicity is at least partly exerted. The chain is Zinc metalloprotease (hap) from Helicobacter pylori (Campylobacter pylori).